Reading from the N-terminus, the 368-residue chain is tRNA-specific 2-thiouridylase MnmA (368 aa).

ATP contacts are provided by residues 11-18 (GMSGGVDS) and Met37. Positions 97-99 (NPD) are interaction with target base in tRNA. The Nucleophile role is filled by Cys102. Cys102 and Cys199 are joined by a disulfide. An ATP-binding site is contributed by Gly127. Residues 149–151 (KDQ) form an interaction with tRNA region. Residue Cys199 is the Cysteine persulfide intermediate of the active site. The interaction with tRNA stretch occupies residues 311–312 (RY).

It belongs to the MnmA/TRMU family. In terms of assembly, interacts with TusE.

It is found in the cytoplasm. It carries out the reaction S-sulfanyl-L-cysteinyl-[protein] + uridine(34) in tRNA + AH2 + ATP = 2-thiouridine(34) in tRNA + L-cysteinyl-[protein] + A + AMP + diphosphate + H(+). Its function is as follows. Catalyzes the 2-thiolation of uridine at the wobble position (U34) of tRNA(Lys), tRNA(Glu) and tRNA(Gln), leading to the formation of s(2)U34, the first step of tRNA-mnm(5)s(2)U34 synthesis. Sulfur is provided by IscS, via a sulfur-relay system. Binds ATP and its substrate tRNAs. This Escherichia coli O157:H7 protein is tRNA-specific 2-thiouridylase MnmA.